The following is a 529-amino-acid chain: Glycylpeptide N-tetradecanoyltransferase (529 aa).

A compositionally biased stretch (polar residues) spans 1–10 (MSEQEGNQSE). Positions 1 to 65 (MSEQEGNQSE…ANPATKLTPS (65 aa)) are disordered. Residues 11-23 (HQSEHVGESEGKL) are compositionally biased toward basic and acidic residues. A compositionally biased stretch (polar residues) spans 26–40 (ETPTTSQSTNASTGT). Tetradecanoyl-CoA contacts are provided by residues 118–121 (FKFW), 252–254 (LCV), and 260–264 (SKRLT). Valine 529 acts as the Proton acceptor; via carboxylate in catalysis.

It belongs to the NMT family. In terms of assembly, monomer.

Its subcellular location is the cytoplasm. The enzyme catalyses N-terminal glycyl-[protein] + tetradecanoyl-CoA = N-tetradecanoylglycyl-[protein] + CoA + H(+). Functionally, adds a myristoyl group to the N-terminal glycine residue of certain cellular proteins. This Ajellomyces capsulatus (Darling's disease fungus) protein is Glycylpeptide N-tetradecanoyltransferase.